The sequence spans 443 residues: MSSQLPILTVSQLNRQVKGFLENEIGLVHVEGEISNLSKPSSGHYYFTLKDSTAQIRCAFFKNRHSSSLLRNFNDGQQIVASGKLSLYEARGEYQLIVEEIVEAGMGILYQRFEELKIKLAREGLFNPERKKTLPRIPETIGIITSPTGAAIQDILSTLARRFPIARIIIYPSEVQGQAAPQQLVNALKLANTHKRCQVLILARGGGSIEDLWAFNDEYLARQIAISEIPVVSGIGHETDFTIADFVADYRAETPTAAATAVTPNCIELFNILDTAIYRLHDAIIRLVKGLQLKLNHLIDKIASPRQTISTYWQTLDYLERQLISAMTQFINLNINKMNLFSTRLQANNPKTQIERTKIQLRQLILQLTQEIRIKVNQLKHQLSTNLSTLHAVSPLATLDRGYAIVSKNQRILFAAQQAQIGDTIDVRLAKGSLACEVTQIKD.

It belongs to the XseA family. Heterooligomer composed of large and small subunits.

It localises to the cytoplasm. It catalyses the reaction Exonucleolytic cleavage in either 5'- to 3'- or 3'- to 5'-direction to yield nucleoside 5'-phosphates.. Bidirectionally degrades single-stranded DNA into large acid-insoluble oligonucleotides, which are then degraded further into small acid-soluble oligonucleotides. In Legionella pneumophila (strain Lens), this protein is Exodeoxyribonuclease 7 large subunit.